Reading from the N-terminus, the 553-residue chain is Probable malate:quinone oxidoreductase (553 aa).

Residues 524–553 (PPPKIDVNTPSQATGTAPARPAKASADMAL) form a disordered region.

This sequence belongs to the MQO family. FAD serves as cofactor.

It catalyses the reaction (S)-malate + a quinone = a quinol + oxaloacetate. It functions in the pathway carbohydrate metabolism; tricarboxylic acid cycle; oxaloacetate from (S)-malate (quinone route): step 1/1. This Burkholderia lata (strain ATCC 17760 / DSM 23089 / LMG 22485 / NCIMB 9086 / R18194 / 383) protein is Probable malate:quinone oxidoreductase.